The primary structure comprises 403 residues: Phosphoglycerate kinase (403 aa).

Substrate contacts are provided by residues 21 to 23 (DFN), Arg-36, 59 to 62 (HLGR), Arg-119, and Arg-159. ATP is bound by residues Lys-214, Gly-301, Glu-332, and 359–362 (GGDS).

Belongs to the phosphoglycerate kinase family. Monomer.

The protein resides in the cytoplasm. The enzyme catalyses (2R)-3-phosphoglycerate + ATP = (2R)-3-phospho-glyceroyl phosphate + ADP. It functions in the pathway carbohydrate degradation; glycolysis; pyruvate from D-glyceraldehyde 3-phosphate: step 2/5. This is Phosphoglycerate kinase from Lactobacillus delbrueckii subsp. lactis.